The following is a 1997-amino-acid chain: Otoferlin (1997 aa).

The 98-residue stretch at 1–98 (MALLIHLKTV…VEESHVEVTD (98 aa)) folds into the C2 1 domain. Over 1-1963 (MALLIHLKTV…ARYFLWHTYR (1963 aa)) the chain is Cytoplasmic. A disordered region spans residues 128-171 (WDDGDFLGDESLQEEEKDSQETDGLLPGSRPSSRPPGEKSFRRA). A compositionally biased stretch (acidic residues) spans 129–145 (DDGDFLGDESLQEEEKD). C2 domains are found at residues 236–357 (KRSK…HKWA) and 400–531 (IEGN…FLPT). The disordered stretch occupies residues 642 to 694 (NEVDGLSRPQRPRPRKEPGDEEEVDLIQNASDDEAGDAGDLASVSSTPPMRPQ). The span at 660 to 678 (GDEEEVDLIQNASDDEAGD) shows a compositional bias: acidic residues. Residues 792–821 (RERLKSCMRELENMGQQARMLRAQVKRHTV) are a coiled coil. 2 consecutive C2 domains span residues 944–1069 (LHAF…PPRF) and 1115–1242 (DRGP…PSWN). Residues Asp976, Asp982, Asp1038, Asp1040, and Asp1046 each coordinate Ca(2+). Disordered regions lie at residues 1299 to 1324 (AEEE…PDES) and 1343 to 1405 (LRQQ…KPKI). Composition is skewed to acidic residues over residues 1314 to 1324 (EEPEEEEPDES) and 1352 to 1361 (DLEEKEEVDN). Residues 1370-1383 (KGKEKARAAKEEKK) show a composition bias toward basic and acidic residues. Positions 1387–1396 (QSSGSGQGSE) are enriched in low complexity. 2 consecutive C2 domains span residues 1464-1593 (LPED…ATCG) and 1714-1865 (DMPA…KQCT). Positions 1508, 1514, 1563, 1565, 1571, 1836, 1839, and 1842 each coordinate Ca(2+). The chain crosses the membrane as a helical span at residues 1964–1984 (WLLLKLLLLLLLLLLLALFLY). Over 1985-1997 (SVPGYLVKKILGA) the chain is Extracellular.

Belongs to the ferlin family. In terms of assembly, interacts with SNAP2; the interaction is direct. Interacts with STX1; the interaction is direct. Interacts with RAB8B. Requires Ca(2+) as cofactor. Isoform 1 and isoform 3 are found in adult brain. Isoform 2 is expressed in the fetus and in adult brain, heart, placenta, skeletal muscle and kidney.

It is found in the cytoplasmic vesicle. It localises to the secretory vesicle. The protein resides in the synaptic vesicle membrane. The protein localises to the basolateral cell membrane. Its subcellular location is the endoplasmic reticulum membrane. It is found in the golgi apparatus membrane. It localises to the presynaptic cell membrane. The protein resides in the cell membrane. Functionally, key calcium ion sensor involved in the Ca(2+)-triggered synaptic vesicle-plasma membrane fusion and in the control of neurotransmitter release at these output synapses. Interacts in a calcium-dependent manner to the presynaptic SNARE proteins at ribbon synapses of cochlear inner hair cells (IHCs) to trigger exocytosis of neurotransmitter. Also essential to synaptic exocytosis in immature outer hair cells (OHCs). May also play a role within the recycling of endosomes. In Homo sapiens (Human), this protein is Otoferlin (OTOF).